A 432-amino-acid chain; its full sequence is Adenylosuccinate synthetase (432 aa).

Residues 13 to 19 (GDEGKGK) and 41 to 43 (GHT) contribute to the GTP site. The Proton acceptor role is filled by Asp-14. Mg(2+) is bound by residues Asp-14 and Gly-41. IMP-binding positions include 14 to 17 (DEGK), 39 to 42 (NAGH), Thr-130, Arg-144, Gln-225, Thr-240, and Arg-304. Catalysis depends on His-42, which acts as the Proton donor. 300–306 (AVTGRPR) contacts substrate. Residues Arg-306, 332–334 (KLD), and 415–417 (STG) contribute to the GTP site.

It belongs to the adenylosuccinate synthetase family. Homodimer. Requires Mg(2+) as cofactor.

It is found in the cytoplasm. It carries out the reaction IMP + L-aspartate + GTP = N(6)-(1,2-dicarboxyethyl)-AMP + GDP + phosphate + 2 H(+). Its pathway is purine metabolism; AMP biosynthesis via de novo pathway; AMP from IMP: step 1/2. In terms of biological role, plays an important role in the de novo pathway of purine nucleotide biosynthesis. Catalyzes the first committed step in the biosynthesis of AMP from IMP. This is Adenylosuccinate synthetase from Haemophilus influenzae (strain PittEE).